The following is a 149-amino-acid chain: Oligosaccharyltransferase complex subunit OSTC (149 aa).

The Cytoplasmic portion of the chain corresponds to methionine 1–threonine 32. The helical transmembrane segment at valine 33–isoleucine 53 threads the bilayer. Residues valine 54–tyrosine 83 lie on the Extracellular side of the membrane. The chain crosses the membrane as a helical span at residues isoleucine 84–leucine 104. Residues aspartate 105 to arginine 117 are Cytoplasmic-facing. The chain crosses the membrane as a helical span at residues phenylalanine 118–phenylalanine 138. Residues methionine 139–glycine 149 lie on the Extracellular side of the membrane.

Belongs to the OSTC family. Component of STT3A-containing oligosaccharyl transferase (OST-A) complex. STT3A-containing complex assembly occurs through the formation of 3 subcomplexes. Subcomplex 1 contains RPN1 and TMEM258, subcomplex 2 contains the STT3A-specific subunits STT3A, DC2/OSTC, and KCP2 as well as the core subunit OST4, and subcomplex 3 contains RPN2, DAD1, and OST48. The OST-A complex can form stable complexes with the Sec61 complex or with both the Sec61 and TRAP complexes. Interacts with PSEN1 and NCSTN; indicative for an association with the gamma-secretase complex.

It localises to the endoplasmic reticulum. It is found in the membrane. It functions in the pathway protein modification; protein glycosylation. Subunit of STT3A-containing oligosaccharyl transferase (OST-A) complex that catalyzes the initial transfer of a defined glycan (Glc(3)Man(9)GlcNAc(2) in eukaryotes) from the lipid carrier dolichol-pyrophosphate to an asparagine residue within an Asn-X-Ser/Thr consensus motif in nascent polypeptide chains, the first step in protein N-glycosylation. N-glycosylation occurs cotranslationally and the complex associates with the Sec61 complex at the channel-forming translocon complex that mediates protein translocation across the endoplasmic reticulum (ER). Within the OST-A complex, acts as an adapter that anchors the OST-A complex to the Sec61 complex. May be involved in N-glycosylation of APP (amyloid-beta precursor protein). Can modulate gamma-secretase cleavage of APP by enhancing endoprotelysis of PSEN1. This Canis lupus familiaris (Dog) protein is Oligosaccharyltransferase complex subunit OSTC.